A 497-amino-acid chain; its full sequence is MGLEALVPLAVIVTIFLLLVDLMHRRQRWAARYPPGPLPLPGLGNLLHVDFQNTPYCFDQLRRRFGDVFSLQLAWTPVVVLNGLAAVREALVTHGEDTADRPPVPITQILGFGPRSQGVFLARYGPAWREQRRFSVSTLRNLGLGKKSLEQWVTEEAACLCAAFANHSGRPFRPNGLLDKAVSNVIASLTCGRRFEYDDPRFLRLLDLAQEGLKEESGFLREVLNAIPVLLHIPALAGKVLRFQKAFLTQLDELLTEHRMTWDPAQPPRDLTEAFLAEMEKAKGNPESSFNDENLRIVVADLFSAGIVTTSTTLAWGLLLMILHPDVQRRVQQEIDDVIGQVRRPEMGDQARMPYTTAVIHEVQRFGDIVPLGVTHMTSRDIEVQGFRIPKGTTLFTNLSSVLKDKAVWEKPFRFHPEHFLDAQGHFVKPEAFLPFSAGRRACLGEPLARMELFLFFTSLLQHFSFSVPTGQPRPSHHGVFAFLVTPSPYELCAVPR.

D301 lines the substrate pocket. Residue C443 participates in heme binding.

This sequence belongs to the cytochrome P450 family. The cofactor is heme.

It is found in the endoplasmic reticulum membrane. The protein resides in the microsome membrane. The catalysed reaction is (5Z,8Z,11Z,14Z)-eicosatetraenoate + reduced [NADPH--hemoprotein reductase] + O2 = (8R,9S)-epoxy-(5Z,11Z,14Z)-eicosatrienoate + oxidized [NADPH--hemoprotein reductase] + H2O + H(+). It carries out the reaction (5Z,8Z,11Z,14Z)-eicosatetraenoate + reduced [NADPH--hemoprotein reductase] + O2 = (11R,12S)-epoxy-(5Z,8Z,14Z)-eicosatrienoate + oxidized [NADPH--hemoprotein reductase] + H2O + H(+). The enzyme catalyses (5Z,8Z,11Z,14Z)-eicosatetraenoate + reduced [NADPH--hemoprotein reductase] + O2 = (14S,15R)-epoxy-(5Z,8Z,11Z)-eicosatrienoate + oxidized [NADPH--hemoprotein reductase] + H2O + H(+). It catalyses the reaction N-(5Z,8Z,11Z,14Z-eicosatetraenoyl)-ethanolamine + reduced [NADPH--hemoprotein reductase] + O2 = N-(8,9-epoxy-5Z,11Z,14Z-eicosatrienoyl)-ethanolamine + oxidized [NADPH--hemoprotein reductase] + H2O + H(+). The catalysed reaction is N-(5Z,8Z,11Z,14Z-eicosatetraenoyl)-ethanolamine + reduced [NADPH--hemoprotein reductase] + O2 = N-(11,12-epoxy-5Z,8Z,14Z-eicosatrienoyl)-ethanolamine + oxidized [NADPH--hemoprotein reductase] + H2O + H(+). It carries out the reaction N-(5Z,8Z,11Z,14Z-eicosatetraenoyl)-ethanolamine + reduced [NADPH--hemoprotein reductase] + O2 = N-(14,15-epoxy-5Z,8Z,11Z-eicosatrienoyl)-ethanolamine + oxidized [NADPH--hemoprotein reductase] + H2O + H(+). The enzyme catalyses N-(5Z,8Z,11Z,14Z-eicosatetraenoyl)-ethanolamine + reduced [NADPH--hemoprotein reductase] + O2 = N-(20-hydroxy-5Z,8Z,11Z,14Z-eicosatetraenoyl)-ethanolamine + oxidized [NADPH--hemoprotein reductase] + H2O + H(+). It catalyses the reaction (5Z,8Z,11Z,14Z,17Z)-eicosapentaenoate + reduced [NADPH--hemoprotein reductase] + O2 = (17S,18R)-epoxy-(5Z,8Z,11Z,14Z)-eicosatetraenoate + oxidized [NADPH--hemoprotein reductase] + H2O + H(+). The catalysed reaction is (4Z,7Z,10Z,13Z,16Z,19Z)-docosahexaenoate + reduced [NADPH--hemoprotein reductase] + O2 = (19R,20S)-epoxy-(4Z,7Z,10Z,13Z,16Z)-docosapentaenoate + oxidized [NADPH--hemoprotein reductase] + H2O + H(+). It carries out the reaction (4Z,7Z,10Z,13Z,16Z,19Z)-docosahexaenoate + reduced [NADPH--hemoprotein reductase] + O2 = (19S,20R)-epoxy-(4Z,7Z,10Z,13Z,16Z)-docosapentaenoate + oxidized [NADPH--hemoprotein reductase] + H2O + H(+). The enzyme catalyses cholesterol + reduced [NADPH--hemoprotein reductase] + O2 = 25-hydroxycholesterol + oxidized [NADPH--hemoprotein reductase] + H2O + H(+). It catalyses the reaction all-trans-retinol + reduced [NADPH--hemoprotein reductase] + O2 = all-trans-retinal + oxidized [NADPH--hemoprotein reductase] + 2 H2O + H(+). It functions in the pathway cofactor metabolism; retinol metabolism. Its pathway is lipid metabolism; fatty acid metabolism. The protein operates within steroid metabolism; cholesterol metabolism. In terms of biological role, a cytochrome P450 monooxygenase involved in the metabolism of fatty acids, steroids and retinoids. Mechanistically, uses molecular oxygen inserting one oxygen atom into a substrate, and reducing the second into a water molecule, with two electrons provided by NADPH via cytochrome P450 reductase (NADPH--hemoprotein reductase). Catalyzes the epoxidation of double bonds of polyunsaturated fatty acids (PUFA). Metabolizes endocannabinoid arachidonoylethanolamide (anandamide) to 20-hydroxyeicosatetraenoic acid ethanolamide (20-HETE-EA) and 8,9-, 11,12-, and 14,15-epoxyeicosatrienoic acid ethanolamides (EpETrE-EAs), potentially modulating endocannabinoid system signaling. Catalyzes the hydroxylation of carbon-hydrogen bonds. Metabolizes cholesterol toward 25-hydroxycholesterol, a physiological regulator of cellular cholesterol homeostasis. Catalyzes the oxidative transformations of all-trans retinol to all-trans retinal, a precursor for the active form all-trans-retinoic acid. Also involved in the oxidative metabolism of drugs such as antiarrhythmics, adrenoceptor antagonists, and tricyclic antidepressants. The chain is Cytochrome P450 2D6 (CYP2D6) from Pan troglodytes (Chimpanzee).